Here is a 592-residue protein sequence, read N- to C-terminus: Membrane protein insertase YidC (592 aa).

The helical transmembrane segment at 7 to 27 (NYFVAIALSVLILVAWQYFYV) threads the bilayer. The interval 38 to 74 (AEKAQQTQQVQPQQGGQQPAPGQALPGGAVPGESRDQ) is disordered. Over residues 41 to 69 (AQQTQQVQPQQGGQQPAPGQALPGGAVPG) the composition is skewed to low complexity. 4 consecutive transmembrane segments (helical) span residues 367–387 (LFGNFGVAILVTTIVVKLIFF), 441–461 (WPILIQIPVFFALYKVIYITI), 486–506 (LFGLLPFDGPAFLHLGIWPII), and 530–550 (FTWMPLVFTFMLASFPAGLVI).

It belongs to the OXA1/ALB3/YidC family. Type 1 subfamily. As to quaternary structure, interacts with the Sec translocase complex via SecD. Specifically interacts with transmembrane segments of nascent integral membrane proteins during membrane integration.

It localises to the cell inner membrane. Required for the insertion and/or proper folding and/or complex formation of integral membrane proteins into the membrane. Involved in integration of membrane proteins that insert both dependently and independently of the Sec translocase complex, as well as at least some lipoproteins. Aids folding of multispanning membrane proteins. The chain is Membrane protein insertase YidC from Sinorhizobium fredii (strain NBRC 101917 / NGR234).